We begin with the raw amino-acid sequence, 320 residues long: 1-aminocyclopropane-1-carboxylate oxidase 3 (320 aa).

Positions 153-253 (PNFGTKVSNY…RMSLASFYNP (101 aa)) constitute a Fe2OG dioxygenase domain. Residues His177, Asp179, and His234 each contribute to the Fe cation site.

It belongs to the iron/ascorbate-dependent oxidoreductase family. Requires Fe cation as cofactor.

The catalysed reaction is 1-aminocyclopropane-1-carboxylate + L-ascorbate + O2 = ethene + L-dehydroascorbate + hydrogen cyanide + CO2 + 2 H2O. Its pathway is alkene biosynthesis; ethylene biosynthesis via S-adenosyl-L-methionine; ethylene from S-adenosyl-L-methionine: step 2/2. The polypeptide is 1-aminocyclopropane-1-carboxylate oxidase 3 (ACO3) (Petunia hybrida (Petunia)).